Here is a 143-residue protein sequence, read N- to C-terminus: Large ribosomal subunit protein uL11 (143 aa).

Belongs to the universal ribosomal protein uL11 family. As to quaternary structure, part of the ribosomal stalk of the 50S ribosomal subunit. Interacts with L10 and the large rRNA to form the base of the stalk. L10 forms an elongated spine to which L12 dimers bind in a sequential fashion forming a multimeric L10(L12)X complex. In terms of processing, one or more lysine residues are methylated.

Functionally, forms part of the ribosomal stalk which helps the ribosome interact with GTP-bound translation factors. This chain is Large ribosomal subunit protein uL11, found in Caulobacter vibrioides (strain ATCC 19089 / CIP 103742 / CB 15) (Caulobacter crescentus).